A 191-amino-acid polypeptide reads, in one-letter code: Scytalone dehydratase PfmaJ (191 aa).

Residues Y25, Y45, and F48 each coordinate substrate. Catalysis depends on residues H80 and H105. Position 126 (N126) interacts with substrate.

Belongs to the scytalone dehydratase family. As to quaternary structure, homotrimer. Each subunit contains an active site, located in the central part of the hydrophobic core of the monomer, which functions independently.

It is found in the endosome. It catalyses the reaction scytalone = 1,3,8-trihydroxynaphthalene + H2O. Its pathway is pigment biosynthesis; melanin biosynthesis. In terms of biological role, scytalone dehydratase involved the biosynthesis of dihydroxynaphthalene (DHN)-melanin, a bluish-green pigment forming a dark layer in the conidial wall that protects the conidia from UV radiations. The first step of the pathway is the production of the pentaketide 1,3,6,8-tetrahydroxynaphthalene (1,3,6,8-THN or T4HN) by the polyketide synthase PfmaE though condensation of acetyl-CoA with malonyl-CoA. T4HN is not stable and easily oxidizes into the stable form flaviolin. T4HN is also substrate of the hydroxynaphthalene reductase PfmaG to yield scytalone. The scytalone dehydratase PfmaJ then reduces scytalone to 1,3,8-THN. 1,3,8-THN is then substrate of the hydroxynaphthalene reductase PfmaI to yield vermelone. Vermelone is further converted by the multicopper oxidase PfmaD to 1,8-DHN. Finally the laccase PFICI_06862 transforms 1,8-DHN to DHN-melanin. The roles of the 5-oxoprolinase PfmaA and the proline iminopeptidase PfmaB within the cluster have not been elucidated yet. This chain is Scytalone dehydratase PfmaJ, found in Pestalotiopsis fici (strain W106-1 / CGMCC3.15140).